Reading from the N-terminus, the 179-residue chain is Large ribosomal subunit protein uL5 (179 aa).

This sequence belongs to the universal ribosomal protein uL5 family. Part of the 50S ribosomal subunit; part of the 5S rRNA/L5/L18/L25 subcomplex. Contacts the 5S rRNA and the P site tRNA. Forms a bridge to the 30S subunit in the 70S ribosome.

In terms of biological role, this is one of the proteins that bind and probably mediate the attachment of the 5S RNA into the large ribosomal subunit, where it forms part of the central protuberance. In the 70S ribosome it contacts protein S13 of the 30S subunit (bridge B1b), connecting the 2 subunits; this bridge is implicated in subunit movement. Contacts the P site tRNA; the 5S rRNA and some of its associated proteins might help stabilize positioning of ribosome-bound tRNAs. The protein is Large ribosomal subunit protein uL5 of Thiobacillus denitrificans (strain ATCC 25259 / T1).